Reading from the N-terminus, the 326-residue chain is Phospho-N-acetylmuramoyl-pentapeptide-transferase (326 aa).

9 consecutive transmembrane segments (helical) span residues 3-23 (ISISAGIVTFLLTLVGIPAFI), 51-71 (TMGGLVFLIAAVVVSFLVALF), 79-99 (VGMILFILVLYGLVGFLDDFL), 115-135 (LALQLLGGVIFYLFYERGGDM), 138-158 (VFGYQVHLGIFYIIFALFWLV), 169-189 (GIDGLASISVVISLSAYGVIA), 195-215 (MDILLVIFAMIGGLLGFFVFN), 221-243 (VFMGDVGSLALGGMLAAISMALH), and 306-326 (FFFWGVGLLASLLTFAILYLM).

This sequence belongs to the glycosyltransferase 4 family. MraY subfamily. Requires Mg(2+) as cofactor.

The protein resides in the cell membrane. It carries out the reaction UDP-N-acetyl-alpha-D-muramoyl-L-alanyl-gamma-D-glutamyl-L-lysyl-D-alanyl-D-alanine + di-trans,octa-cis-undecaprenyl phosphate = Mur2Ac(oyl-L-Ala-gamma-D-Glu-L-Lys-D-Ala-D-Ala)-di-trans,octa-cis-undecaprenyl diphosphate + UMP. It functions in the pathway cell wall biogenesis; peptidoglycan biosynthesis. Catalyzes the initial step of the lipid cycle reactions in the biosynthesis of the cell wall peptidoglycan: transfers peptidoglycan precursor phospho-MurNAc-pentapeptide from UDP-MurNAc-pentapeptide onto the lipid carrier undecaprenyl phosphate, yielding undecaprenyl-pyrophosphoryl-MurNAc-pentapeptide, known as lipid I. In Streptococcus pneumoniae (strain Taiwan19F-14), this protein is Phospho-N-acetylmuramoyl-pentapeptide-transferase.